Here is a 135-residue protein sequence, read N- to C-terminus: Interleukin-4 (135 aa).

The first 24 residues, 1 to 24 (MGLTYQLIPVLVCLLVCTSHFVHG), serve as a signal peptide directing secretion. 3 cysteine pairs are disulfide-bonded: Cys27–Cys135, Cys48–Cys85, and Cys70–Cys105. An N-linked (GlcNAc...) asparagine glycan is attached at Asn62.

The protein belongs to the IL-4/IL-13 family.

Its subcellular location is the secreted. In terms of biological role, participates in at least several B-cell activation processes as well as of other cell types. It is a costimulator of DNA-synthesis. It induces the expression of class II MHC molecules on resting B-cells. It enhances both secretion and cell surface expression of IgE and IgG1. It also regulates the expression of the low affinity Fc receptor for IgE (CD23) on both lymphocytes and monocytes. Positively regulates IL31RA expression in macrophages. Stimulates autophagy in dendritic cells by interfering with mTORC1 signaling and through the induction of RUFY4. The polypeptide is Interleukin-4 (IL4) (Bubalus carabanensis (Swamp type water buffalo)).